The primary structure comprises 74 residues: Protein SlyX homolog (74 aa).

Belongs to the SlyX family.

The sequence is that of Protein SlyX homolog from Neisseria meningitidis serogroup C (strain 053442).